A 251-amino-acid polypeptide reads, in one-letter code: Imidazole glycerol phosphate synthase subunit HisF (251 aa).

Catalysis depends on residues aspartate 11 and aspartate 130.

The protein belongs to the HisA/HisF family. Heterodimer of HisH and HisF.

The protein resides in the cytoplasm. It catalyses the reaction 5-[(5-phospho-1-deoxy-D-ribulos-1-ylimino)methylamino]-1-(5-phospho-beta-D-ribosyl)imidazole-4-carboxamide + L-glutamine = D-erythro-1-(imidazol-4-yl)glycerol 3-phosphate + 5-amino-1-(5-phospho-beta-D-ribosyl)imidazole-4-carboxamide + L-glutamate + H(+). Its pathway is amino-acid biosynthesis; L-histidine biosynthesis; L-histidine from 5-phospho-alpha-D-ribose 1-diphosphate: step 5/9. Its function is as follows. IGPS catalyzes the conversion of PRFAR and glutamine to IGP, AICAR and glutamate. The HisF subunit catalyzes the cyclization activity that produces IGP and AICAR from PRFAR using the ammonia provided by the HisH subunit. The protein is Imidazole glycerol phosphate synthase subunit HisF of Parabacteroides distasonis (strain ATCC 8503 / DSM 20701 / CIP 104284 / JCM 5825 / NCTC 11152).